The following is an 831-amino-acid chain: Multiphosphoryl transfer protein (831 aa).

Positions 1 to 90 (MLTIQFLCPL…EYIQVRFIDS (90 aa)) constitute an HPr domain. The active-site Pros-phosphohistidine intermediate; for HPr activity is the His-15. His-15 carries the phosphohistidine; by EI modification. Residues 119-650 (GNVLASGVGV…AVKSQLRQLD (532 aa)) are PTS EI. The Tele-phosphohistidine intermediate; for PTS EI activity role is filled by His-298. The residue at position 298 (His-298) is a Phosphohistidine; by autocatalysis. Phosphoenolpyruvate is bound by residues Arg-405 and Arg-441. Mg(2+)-binding residues include Glu-540 and Asp-564. Phosphoenolpyruvate-binding positions include 563 to 564 (ND) and Arg-574. Cys-611 acts as the Proton donor; for EI activity in catalysis. Residues 685–828 (PLLALENIFV…QSILTLLETE (144 aa)) form the PTS EIIA type-2 domain. His-747 serves as the catalytic Tele-phosphohistidine intermediate; for PTS EIIA activity. At His-747 the chain carries Phosphohistidine; by HPr.

The protein belongs to the PEP-utilizing enzyme family. The cofactor is Mg(2+).

Its subcellular location is the cytoplasm. It catalyses the reaction L-histidyl-[protein] + phosphoenolpyruvate = N(pros)-phospho-L-histidyl-[protein] + pyruvate. The enzyme catalyses D-fructose(out) + N(pros)-phospho-L-histidyl-[protein] = D-fructose 1-phosphate(in) + L-histidyl-[protein]. Its function is as follows. Multifunctional protein that includes general (non sugar-specific) and sugar-specific components of the phosphoenolpyruvate-dependent sugar phosphotransferase system (sugar PTS). This major carbohydrate active transport system catalyzes the phosphorylation of incoming sugar substrates concomitantly with their translocation across the cell membrane. The enzyme II FryABC PTS system is involved in fructose transport. The sequence is that of Multiphosphoryl transfer protein (fryA) from Escherichia coli O157:H7.